Consider the following 160-residue polypeptide: Transcriptional repressor NrdR (160 aa).

Residues 1–11 (MRCPSCNSLDT) are compositionally biased toward polar residues. The interval 1–20 (MRCPSCNSLDTQVKDSRPTE) is disordered. The segment at 3-34 (CPSCNSLDTQVKDSRPTEDSAVIRRRRVCMAC) is a zinc-finger region. One can recognise an ATP-cone domain in the interval 49–139 (LTVIKRNGRR…VYRNFREAKD (91 aa)).

It belongs to the NrdR family. It depends on Zn(2+) as a cofactor.

Its function is as follows. Negatively regulates transcription of bacterial ribonucleotide reductase nrd genes and operons by binding to NrdR-boxes. The chain is Transcriptional repressor NrdR from Nitrobacter winogradskyi (strain ATCC 25391 / DSM 10237 / CIP 104748 / NCIMB 11846 / Nb-255).